The following is a 618-amino-acid chain: uncharacterized protein (618 aa).

The segment at residues 18-47 (SCQRCRQRKIKCDRLHPCFQCVKSNSQCFY) is a DNA-binding region (zn(2)-C6 fungal-type). Serine 598 carries the post-translational modification Phosphoserine.

Its subcellular location is the nucleus. This is an uncharacterized protein from Schizosaccharomyces pombe (strain 972 / ATCC 24843) (Fission yeast).